The primary structure comprises 1798 residues: U3 small nucleolar RNA-associated protein 10 (1798 aa).

An HEAT 1 repeat occupies 583 to 620; that stretch reads LDFQALLPFLLVTLTDPSERVRREAAAALAAVGSLYKK. Helical transmembrane passes span 942–962 and 998–1018; these read IQSG…AIVN and ALLL…HSVM. HEAT repeat units lie at residues 1042 to 1079, 1249 to 1286, 1293 to 1331, and 1754 to 1791; these read QTID…AFEH, LTLV…QNPE, IRVL…KYGK, and ALLP…VLGE.

Belongs to the HEATR1/UTP10 family. In terms of assembly, component of the ribosomal small subunit (SSU) processome.

Its subcellular location is the nucleus. The protein resides in the nucleolus. The protein localises to the membrane. Functionally, involved in nucleolar processing of pre-18S ribosomal RNA. Involved in ribosome biosynthesis. This chain is U3 small nucleolar RNA-associated protein 10, found in Aspergillus fumigatus (strain ATCC MYA-4609 / CBS 101355 / FGSC A1100 / Af293) (Neosartorya fumigata).